Here is a 396-residue protein sequence, read N- to C-terminus: Cell division protein FtsZ 1 (396 aa).

The tract at residues 1 to 38 (MDSIVQDAIDEAEESEDSASEPADVAGGGGDTVPTGTM) is disordered. The span at 8–19 (AIDEAEESEDSA) shows a compositional bias: acidic residues. GTP-binding positions include 61–65 (GAGSN), 148–150 (GTG), glutamate 179, arginine 183, and aspartate 226. Positions 358–396 (QIYGRNEAAEGDGPAQESTPEPEPEPQAGSEIEDIDYVE) are disordered.

This sequence belongs to the FtsZ family. As to quaternary structure, homodimer. Polymerizes to form a dynamic ring structure in a strictly GTP-dependent manner. Interacts directly with several other division proteins.

Its subcellular location is the cytoplasm. Its function is as follows. Essential cell division protein that forms a contractile ring structure (Z ring) at the future cell division site. The regulation of the ring assembly controls the timing and the location of cell division. One of the functions of the FtsZ ring is to recruit other cell division proteins to the septum to produce a new cell wall between the dividing cells. Binds GTP and shows GTPase activity. This is Cell division protein FtsZ 1 from Halobacterium salinarum (strain ATCC 29341 / DSM 671 / R1).